The chain runs to 201 residues: Potassium-transporting ATPase KdpC subunit (201 aa).

A helical membrane pass occupies residues 7–27 (PALVLLVALTAITGLAYPLAV).

Belongs to the KdpC family. As to quaternary structure, the system is composed of three essential subunits: KdpA, KdpB and KdpC.

The protein resides in the cell inner membrane. In terms of biological role, part of the high-affinity ATP-driven potassium transport (or Kdp) system, which catalyzes the hydrolysis of ATP coupled with the electrogenic transport of potassium into the cytoplasm. This subunit acts as a catalytic chaperone that increases the ATP-binding affinity of the ATP-hydrolyzing subunit KdpB by the formation of a transient KdpB/KdpC/ATP ternary complex. The polypeptide is Potassium-transporting ATPase KdpC subunit (Methylorubrum extorquens (strain CM4 / NCIMB 13688) (Methylobacterium extorquens)).